The chain runs to 216 residues: Peptide methionine sulfoxide reductase MsrA (216 aa).

The active site involves Cys-54.

Belongs to the MsrA Met sulfoxide reductase family.

The enzyme catalyses L-methionyl-[protein] + [thioredoxin]-disulfide + H2O = L-methionyl-(S)-S-oxide-[protein] + [thioredoxin]-dithiol. It carries out the reaction [thioredoxin]-disulfide + L-methionine + H2O = L-methionine (S)-S-oxide + [thioredoxin]-dithiol. Has an important function as a repair enzyme for proteins that have been inactivated by oxidation. Catalyzes the reversible oxidation-reduction of methionine sulfoxide in proteins to methionine. This is Peptide methionine sulfoxide reductase MsrA from Xanthomonas oryzae pv. oryzae (strain PXO99A).